Here is a 552-residue protein sequence, read N- to C-terminus: Serine protease 53 (552 aa).

Positions 1–23 are cleaved as a signal peptide; it reads MRQSWRPELLIVGAVVVIEGLQA. 2 Peptidase S1 domains span residues 24–273 and 294–525; these read AQRA…AHVH and VACG…NLDW. Positions 27–46 are disordered; it reads ACGQRGPGPPEPQEGNTLPG. Cysteines 62 and 78 form a disulfide. Residues histidine 77 and aspartate 128 each act as charge relay system in the active site. Disulfide bonds link cysteine 158/cysteine 230, cysteine 187/cysteine 209, cysteine 220/cysteine 249, and cysteine 326/cysteine 342. Residues serine 224, histidine 341, and aspartate 382 each act as charge relay system in the active site. Cystine bridges form between cysteine 443/cysteine 463 and cysteine 473/cysteine 501. The active-site Charge relay system is serine 477.

The protein belongs to the peptidase S1 family.

It is found in the secreted. In vitro can degrade the fibrinogen alpha chain of as well as pro-urokinase-type plasminogen activator. The chain is Serine protease 53 (Prss53) from Mus musculus (Mouse).